We begin with the raw amino-acid sequence, 299 residues long: Nitrogenase iron protein (299 aa).

Gly8–Ser15 is an ATP binding site. Cys96 provides a ligand contact to [4Fe-4S] cluster. Position 99 is an ADP-ribosylarginine; by dinitrogenase reductase ADP-ribosyltransferase (Arg99). Cys130 lines the [4Fe-4S] cluster pocket.

It belongs to the NifH/BchL/ChlL family. As to quaternary structure, homodimer. Requires [4Fe-4S] cluster as cofactor. Post-translationally, the reversible ADP-ribosylation of Arg-99 inactivates the nitrogenase reductase and regulates nitrogenase activity.

It carries out the reaction N2 + 8 reduced [2Fe-2S]-[ferredoxin] + 16 ATP + 16 H2O = H2 + 8 oxidized [2Fe-2S]-[ferredoxin] + 2 NH4(+) + 16 ADP + 16 phosphate + 6 H(+). Functionally, the key enzymatic reactions in nitrogen fixation are catalyzed by the nitrogenase complex, which has 2 components: the iron protein and the molybdenum-iron protein. The chain is Nitrogenase iron protein from Gloeothece citriformis (strain PCC 7424) (Cyanothece sp. (strain PCC 7424)).